A 373-amino-acid polypeptide reads, in one-letter code: D-alanine--D-alanine ligase (373 aa).

Residues 156–363 (KKLLAADGLP…YPTLLATMIE (208 aa)) enclose the ATP-grasp domain. Residue 184 to 239 (CERLGLPVFVKPARGGSSIGVSRVSSWDQLPAAVARARRHDPKVIVEAAISGRELE) coordinates ATP. Mg(2+) is bound by residues aspartate 318, glutamate 330, and asparagine 332.

It belongs to the D-alanine--D-alanine ligase family. Mg(2+) is required as a cofactor. The cofactor is Mn(2+).

It localises to the cytoplasm. It catalyses the reaction 2 D-alanine + ATP = D-alanyl-D-alanine + ADP + phosphate + H(+). Its pathway is cell wall biogenesis; peptidoglycan biosynthesis. Functionally, cell wall formation. The sequence is that of D-alanine--D-alanine ligase from Mycobacterium tuberculosis (strain ATCC 25177 / H37Ra).